We begin with the raw amino-acid sequence, 547 residues long: Chaperonin GroEL (547 aa).

ATP-binding positions include 30–33 (TLGP), Lys-51, 87–91 (DGTTT), Gly-415, 479–481 (NAA), and Asp-495.

The protein belongs to the chaperonin (HSP60) family. As to quaternary structure, forms a cylinder of 14 subunits composed of two heptameric rings stacked back-to-back. Interacts with the co-chaperonin GroES.

It localises to the cytoplasm. The enzyme catalyses ATP + H2O + a folded polypeptide = ADP + phosphate + an unfolded polypeptide.. In terms of biological role, together with its co-chaperonin GroES, plays an essential role in assisting protein folding. The GroEL-GroES system forms a nano-cage that allows encapsulation of the non-native substrate proteins and provides a physical environment optimized to promote and accelerate protein folding. The sequence is that of Chaperonin GroEL from Pseudomonas paraeruginosa (strain DSM 24068 / PA7) (Pseudomonas aeruginosa (strain PA7)).